A 251-amino-acid polypeptide reads, in one-letter code: CDP-diacylglycerol pyrophosphatase (251 aa).

The chain crosses the membrane as a helical span at residues 4–24; it reads AGLLFLVMIVIAVVAAGIGYW.

The protein belongs to the Cdh family.

The protein resides in the cell inner membrane. It catalyses the reaction a CDP-1,2-diacyl-sn-glycerol + H2O = a 1,2-diacyl-sn-glycero-3-phosphate + CMP + 2 H(+). It functions in the pathway phospholipid metabolism; CDP-diacylglycerol degradation; phosphatidate from CDP-diacylglycerol: step 1/1. The chain is CDP-diacylglycerol pyrophosphatase from Escherichia coli O9:H4 (strain HS).